The primary structure comprises 198 residues: uncharacterized protein (198 aa).

Helical transmembrane passes span 20-40 (VIVGVVLGLAGTGALIGGLWA), 70-90 (FFVAPCLMLGLLTVLAVTASV), 107-127 (LAIGLMICAATAAAVGALLVW), and 164-184 (VAATVLWPAGIAALVYAVLAA).

To M.tuberculosis Rv1591.

The protein localises to the cell membrane. This is an uncharacterized protein from Mycobacterium leprae (strain TN).